The chain runs to 243 residues: Adenosine 5'-phosphosulfate reductase (243 aa).

Belongs to the PAPS reductase family. CysH subfamily. [4Fe-4S] cluster serves as cofactor.

It localises to the cytoplasm. It catalyses the reaction [thioredoxin]-disulfide + sulfite + AMP + 2 H(+) = adenosine 5'-phosphosulfate + [thioredoxin]-dithiol. It participates in sulfur metabolism; hydrogen sulfide biosynthesis; sulfite from sulfate. Catalyzes the formation of sulfite from adenosine 5'-phosphosulfate (APS) using thioredoxin as an electron donor. This is Adenosine 5'-phosphosulfate reductase from Staphylococcus haemolyticus (strain JCSC1435).